The following is a 1396-amino-acid chain: Sterol 3-beta-glucosyltransferase (1396 aa).

Over residues 1–16 (MRPLLDEAKRRVDRRL) the composition is skewed to basic and acidic residues. 3 disordered regions span residues 1-59 (MRPL…TKEG), 82-193 (HARF…AAPV), and 206-233 (SKGSMNQSPRSPPAETQEEQSQEQTSAS). Residues 18 to 28 (ASRQSLSTSRI) show a composition bias toward polar residues. 2 stretches are compositionally biased toward basic and acidic residues: residues 35 to 44 (ERLKDDHDAQ) and 82 to 108 (HARFDDSSDSERDTDRPPQKRTEKESQ). Positions 156–175 (GSSQRQGGAQTEPSTGNQMS) are enriched in polar residues. The region spanning 237-288 (LRLMEMFGFESPEKVLVEYACSLVQSMLLQGYMYVTEGHICFYAYLPRKSTV) is the GRAM 1 domain. Residues 289–387 (AIKSGYLYKR…WVKSLQKVIF (99 aa)) enclose the PH domain. Composition is skewed to polar residues over residues 459–479 (QAKNPSRESPQPGRTTPQSRA) and 487–497 (SLTSGLSQVLG). 2 disordered regions span residues 459 to 531 (QAKN…RDLS) and 576 to 635 (FRRQ…VQQS). The segment covering 585–595 (QFGRRHSDETA) has biased composition (basic and acidic residues). The 67-residue stretch at 719 to 785 (DRFRAHFALP…KDVENVEKEK (67 aa)) folds into the GRAM 2 domain. The disordered stretch occupies residues 841 to 880 (EQDESEAAKAEHRMLQEARKDASGGLIPQTPSDESPEIHP). Residues 846 to 862 (EAAKAEHRMLQEARKDA) show a composition bias toward basic and acidic residues. UDP-alpha-D-glucose-binding residues include Ser907, Arg908, Asp910, Ala1210, His1212, His1225, Gly1229, Thr1230, Asp1249, and Gln1250.

Belongs to the glycosyltransferase 28 family.

The protein localises to the cytoplasm. The protein resides in the preautophagosomal structure membrane. The enzyme catalyses a sterol + UDP-alpha-D-glucose = a sterol 3-beta-D-glucoside + UDP + H(+). It catalyses the reaction ergosterol + UDP-alpha-D-glucose = ergosteryl 3-beta-D-glucoside + UDP + H(+). In terms of biological role, sterol glycosyltransferase responsible for the glycosylation of ergosterol to form ergosterol-glucoside. This is Sterol 3-beta-glucosyltransferase from Aspergillus terreus (strain NIH 2624 / FGSC A1156).